We begin with the raw amino-acid sequence, 554 residues long: Phenylalanine--tRNA ligase beta subunit (554 aa).

A B5 domain is found at L276 to G351. Residues D329, D335, E338, and E339 each contribute to the Mg(2+) site.

Belongs to the phenylalanyl-tRNA synthetase beta subunit family. Type 2 subfamily. As to quaternary structure, tetramer of two alpha and two beta subunits. The cofactor is Mg(2+).

The protein localises to the cytoplasm. The catalysed reaction is tRNA(Phe) + L-phenylalanine + ATP = L-phenylalanyl-tRNA(Phe) + AMP + diphosphate + H(+). This is Phenylalanine--tRNA ligase beta subunit from Methanococcus maripaludis (strain C7 / ATCC BAA-1331).